The sequence spans 198 residues: ATP-dependent Clp protease proteolytic subunit 1 (198 aa).

Serine 98 (nucleophile) is an active-site residue. The active site involves histidine 123.

Belongs to the peptidase S14 family. In terms of assembly, fourteen ClpP subunits assemble into 2 heptameric rings which stack back to back to give a disk-like structure with a central cavity, resembling the structure of eukaryotic proteasomes.

Its subcellular location is the cytoplasm. The catalysed reaction is Hydrolysis of proteins to small peptides in the presence of ATP and magnesium. alpha-casein is the usual test substrate. In the absence of ATP, only oligopeptides shorter than five residues are hydrolyzed (such as succinyl-Leu-Tyr-|-NHMec, and Leu-Tyr-Leu-|-Tyr-Trp, in which cleavage of the -Tyr-|-Leu- and -Tyr-|-Trp bonds also occurs).. Cleaves peptides in various proteins in a process that requires ATP hydrolysis. Has a chymotrypsin-like activity. Plays a major role in the degradation of misfolded proteins. This chain is ATP-dependent Clp protease proteolytic subunit 1, found in Leptospira interrogans serogroup Icterohaemorrhagiae serovar copenhageni (strain Fiocruz L1-130).